A 621-amino-acid polypeptide reads, in one-letter code: Chaperone protein HscA homolog (621 aa).

It belongs to the heat shock protein 70 family.

Chaperone involved in the maturation of iron-sulfur cluster-containing proteins. Has a low intrinsic ATPase activity which is markedly stimulated by HscB. This is Chaperone protein HscA homolog from Acidithiobacillus ferrooxidans (strain ATCC 23270 / DSM 14882 / CIP 104768 / NCIMB 8455) (Ferrobacillus ferrooxidans (strain ATCC 23270)).